Here is a 572-residue protein sequence, read N- to C-terminus: E3 SUMO-protein ligase PIAS2 (572 aa).

The 35-residue stretch at 11–45 (VSSFRVSELQVLLGFAGRNKSGRKHDLLMRALHLL) folds into the SAP domain. The LXXLL motif motif lies at 19–23 (LQVLL). Residues Lys-46 and Lys-249 each participate in a glycyl lysine isopeptide (Lys-Gly) (interchain with G-Cter in SUMO2) cross-link. The region spanning 134–299 (QPSPPIPPVH…SMSVYLVRQL (166 aa)) is the PINIT domain. The SP-RING-type zinc-finger motif lies at 331–412 (PDSEIATTSL…FMEILNDCSD (82 aa)). Residues Cys-362, His-364, Cys-385, and Cys-388 each coordinate Zn(2+). Glycyl lysine isopeptide (Lys-Gly) (interchain with G-Cter in SUMO2) cross-links involve residues Lys-430, Lys-435, Lys-443, and Lys-452. Residues 467-473 (IDVIDLT) form an SUMO1-binding region. Residues Ser-476, Ser-477, and Ser-478 each carry the phosphoserine modification. The Nuclear localization signal signature appears at 484 to 492 (PPAKRKCIF). Lys-489 is covalently cross-linked (Glycyl lysine isopeptide (Lys-Gly) (interchain with G-Cter in SUMO2)). At Ser-499 the chain carries Phosphoserine. A Glycyl lysine isopeptide (Lys-Gly) (interchain with G-Cter in SUMO2) cross-link involves residue Lys-502. Positions 523 to 572 (AAIPPSLTDYSVPFHHTPVSSMSSDLPGEQRRNDINNEVQLGTSSDTVQQ) are disordered. Residues 558-572 (NNEVQLGTSSDTVQQ) are compositionally biased toward polar residues.

This sequence belongs to the PIAS family. In terms of assembly, binds SUMO1 and UBE2I. Interacts with AXIN1, JUN, MDM2, PARK7, TP53 and TP73 isoform alpha, but not TP73 isoform beta. Interacts with STAT4 following IL12 and IFN-alpha stimulation of T-cells. Interacts also with GTF2I, GTF2IRD1, IKFZ1, DAB2 and MSX2, as well as with several steroid receptors, including ESR1, ESR2, NR3C1, PGR, AR, and with NCOA2. Sumoylation of a target protein seems to enhance the interaction. Binds to sumoylated ELK1. Binds DNA, such as CDKN1A promoter, in a sequence-specific manner. Interacts with PLAG1. Interacts with KLF8; the interaction results in SUMO ligation and repression of KLF8 transcriptional activity and of its cell cycle progression into G(1) phase. Interacts with IFIH1/MDA5. Interacts with PML. Interacts with PRDM1. Sumoylated. In terms of tissue distribution, mainly expressed in testis.

The protein localises to the nucleus speckle. It is found in the nucleus. It localises to the PML body. Its pathway is protein modification; protein sumoylation. Its function is as follows. Functions as an E3-type small ubiquitin-like modifier (SUMO) ligase, stabilizing the interaction between UBE2I and the substrate, and as a SUMO-tethering factor. Plays a crucial role as a transcriptional coregulation in various cellular pathways, including the STAT pathway, the p53 pathway and the steroid hormone signaling pathway. The effects of this transcriptional coregulation, transactivation or silencing may vary depending upon the biological context and PIAS2 isoform studied. However, it seems to be mostly involved in gene silencing. Binds to sumoylated ELK1 and enhances its transcriptional activity by preventing recruitment of HDAC2 by ELK1, thus reversing SUMO-mediated repression of ELK1 transactivation activity. Sumoylates PML at'Lys-65' and 'Lys-160'. In Rattus norvegicus (Rat), this protein is E3 SUMO-protein ligase PIAS2 (Pias2).